Consider the following 374-residue polypeptide: Dual-specificity RNA methyltransferase RlmN (374 aa).

Residue glutamate 94 is the Proton acceptor of the active site. Positions 100 to 339 constitute a Radical SAM core domain; the sequence is EEDRATLCVS…VTIRKTRGDD (240 aa). A disulfide bridge connects residues cysteine 107 and cysteine 344. Residues cysteine 114, cysteine 118, and cysteine 121 each contribute to the [4Fe-4S] cluster site. S-adenosyl-L-methionine is bound by residues 168-169, serine 200, 222-224, and asparagine 301; these read GE and SLH. Cysteine 344 (S-methylcysteine intermediate) is an active-site residue.

This sequence belongs to the radical SAM superfamily. RlmN family. It depends on [4Fe-4S] cluster as a cofactor.

It localises to the cytoplasm. The enzyme catalyses adenosine(2503) in 23S rRNA + 2 reduced [2Fe-2S]-[ferredoxin] + 2 S-adenosyl-L-methionine = 2-methyladenosine(2503) in 23S rRNA + 5'-deoxyadenosine + L-methionine + 2 oxidized [2Fe-2S]-[ferredoxin] + S-adenosyl-L-homocysteine. It carries out the reaction adenosine(37) in tRNA + 2 reduced [2Fe-2S]-[ferredoxin] + 2 S-adenosyl-L-methionine = 2-methyladenosine(37) in tRNA + 5'-deoxyadenosine + L-methionine + 2 oxidized [2Fe-2S]-[ferredoxin] + S-adenosyl-L-homocysteine. Specifically methylates position 2 of adenine 2503 in 23S rRNA and position 2 of adenine 37 in tRNAs. m2A2503 modification seems to play a crucial role in the proofreading step occurring at the peptidyl transferase center and thus would serve to optimize ribosomal fidelity. This Vibrio vulnificus (strain CMCP6) protein is Dual-specificity RNA methyltransferase RlmN.